The chain runs to 117 residues: NADH-ubiquinone oxidoreductase chain 3 (117 aa).

Transmembrane regions (helical) follow at residues 2–22 (ILYV…IYLL), 56–76 (FFIL…LFPV), and 85–105 (SPLI…GLLY).

This sequence belongs to the complex I subunit 3 family.

Its subcellular location is the mitochondrion membrane. It catalyses the reaction a ubiquinone + NADH + 5 H(+)(in) = a ubiquinol + NAD(+) + 4 H(+)(out). Its function is as follows. Core subunit of the mitochondrial membrane respiratory chain NADH dehydrogenase (Complex I) that is believed to belong to the minimal assembly required for catalysis. Complex I functions in the transfer of electrons from NADH to the respiratory chain. The immediate electron acceptor for the enzyme is believed to be ubiquinone. The polypeptide is NADH-ubiquinone oxidoreductase chain 3 (ND3) (Albinaria caerulea (Land snail)).